Here is a 146-residue protein sequence, read N- to C-terminus: Large ribosomal subunit protein uL15 (146 aa).

The disordered stretch occupies residues M1–E51. 2 stretches are compositionally biased toward gly residues: residues T23–Q35 and S42–E51.

The protein belongs to the universal ribosomal protein uL15 family. Part of the 50S ribosomal subunit.

In terms of biological role, binds to the 23S rRNA. In Streptococcus gordonii (strain Challis / ATCC 35105 / BCRC 15272 / CH1 / DL1 / V288), this protein is Large ribosomal subunit protein uL15.